The sequence spans 107 residues: Protein HitA (107 aa).

Residues 5 to 107 (IFCKIAAKEI…LHIHIMGTPV (103 aa)) form the HIT domain. Positions 97–101 (HLHIH) match the Histidine triad motif motif.

The protein is Protein HitA (hitA) of Neisseria gonorrhoeae.